Consider the following 141-residue polypeptide: Hemoglobin subunit alpha (141 aa).

The region spanning 1 to 141 (VLSPADKNNV…VSTVLTSKYR (141 aa)) is the Globin domain. Position 3 is a phosphoserine (Ser3). N6-succinyllysine is present on residues Lys7 and Lys11. Residue Lys16 is modified to N6-acetyllysine; alternate. Lys16 carries the post-translational modification N6-succinyllysine; alternate. Tyr24 is subject to Phosphotyrosine. A Phosphoserine modification is found at Ser35. N6-succinyllysine is present on Lys40. The residue at position 49 (Ser49) is a Phosphoserine. Residue His58 coordinates O2. Position 87 (His87) interacts with heme b. Residue Ser102 is modified to Phosphoserine. Position 108 is a phosphothreonine (Thr108). Phosphoserine is present on residues Ser124 and Ser131. Residues Thr134 and Thr137 each carry the phosphothreonine modification. Phosphoserine is present on Ser138.

Belongs to the globin family. As to quaternary structure, heterotetramer of two alpha chains and two beta chains. As to expression, red blood cells.

Functionally, involved in oxygen transport from the lung to the various peripheral tissues. In terms of biological role, hemopressin acts as an antagonist peptide of the cannabinoid receptor CNR1. Hemopressin-binding efficiently blocks cannabinoid receptor CNR1 and subsequent signaling. The protein is Hemoglobin subunit alpha (HBA) of Urocitellus townsendii (Townsend's ground squirrel).